We begin with the raw amino-acid sequence, 3948 residues long: Hybrid PKS-NRPS synthetase fsa1 (3948 aa).

One can recognise a Ketosynthase family 3 (KS3) domain in the interval S4–A438. Residues C177, H316, and H358 each act as for beta-ketoacyl synthase activity in the active site. The malonyl-CoA:ACP transacylase (MAT) domain stretch occupies residues I543–G846. Residues H931–P1066 form an N-terminal hotdog fold region. The segment at H931–T1233 is dehydratase (DH) domain. In terms of domain architecture, PKS/mFAS DH spans H931–A1235. The Proton acceptor; for dehydratase activity role is filled by H964. Positions L1081 to A1235 are C-terminal hotdog fold. The active-site Proton donor; for dehydratase activity is D1141. Positions Y1381–P1578 are methyltransferase (MT) domain. Residues T2105–S2277 are ketoreductase (KR) domain. Residues A2389–L2464 enclose the Carrier 1 domain. S2424 carries the post-translational modification O-(pantetheine 4'-phosphoryl)serine. The interval E2475–F2555 is disordered. Polar residues-rich tracts occupy residues V2487 to S2505 and G2513 to W2528. Positions D2529–D2541 are enriched in basic and acidic residues. Residues A2542–P2551 are compositionally biased toward polar residues. Residues D2547–S2976 form a condensation (C) domain region. The segment at L3000–T3402 is adenylation (A) (KR) domain. The Carrier 2 domain maps to K3540 to G3617. S3577 bears the O-(pantetheine 4'-phosphoryl)serine mark. Residues L3653–I3870 form a reductase (RED) domain region.

The protein in the C-terminal section; belongs to the NRP synthetase family.

The enzyme catalyses L-serine + 7 malonyl-CoA + acetyl-CoA + 2 S-adenosyl-L-methionine + ATP + 8 NADPH + 11 H(+) = (5S)-3-[(2E,6R,8E,10E,12E)-2,6-dimethyltetradeca-2,8,10,12-tetraenoyl]-5-(hydroxymethyl)pyrrolidine-2,4-dione + AMP + 2 S-adenosyl-L-homocysteine + 7 CO2 + diphosphate + 8 NADP(+) + 8 CoA + 6 H2O. Its pathway is mycotoxin biosynthesis. Its function is as follows. Hybrid PKS-NRPS synthetase; part of the gene cluster that mediates the biosynthesis of HIV-1 integrase inhibitor equisetin and of fusarisetin A, both trans-fused decalin-containing tetramic acids showing also antimicrobial activity. The PKS module of fsa1 together with the enoylreductase fsa3 catalyze the formation of the polyketide unit which is then conjugated to L-serine by the condensation domain of the fsa1 NRPS module. Activity of the Dieckmann cyclase domain (RED) results in release of the Dieckmann product intermediate. Diels-Alderase fsa2 is involved in endo-selective Diels-Alder cycloaddition to form the decalin ring, leading to the production of N-desmethylequisetin also called trichosetin. Subsequent N-methylation is carried out by fsa4 to give equisetin. The enzymatic gene responsible for the conversion of equisetin to fusarisetin A has not been identified yet and is probably located outside of the fsa cluster. The protein is Hybrid PKS-NRPS synthetase fsa1 of Fusarium sp. (strain FN080326).